The primary structure comprises 331 residues: Anthranilate phosphoribosyltransferase (331 aa).

5-phospho-alpha-D-ribose 1-diphosphate contacts are provided by residues G79, G82–D83, T87, N89–T92, K107–S115, and S119. G79 is an anthranilate binding site. S91 is a binding site for Mg(2+). N110 is a binding site for anthranilate. R165 contacts anthranilate. Positions 223 and 224 each coordinate Mg(2+).

It belongs to the anthranilate phosphoribosyltransferase family. As to quaternary structure, homodimer. The cofactor is Mg(2+).

It catalyses the reaction N-(5-phospho-beta-D-ribosyl)anthranilate + diphosphate = 5-phospho-alpha-D-ribose 1-diphosphate + anthranilate. It participates in amino-acid biosynthesis; L-tryptophan biosynthesis; L-tryptophan from chorismate: step 2/5. Its function is as follows. Catalyzes the transfer of the phosphoribosyl group of 5-phosphorylribose-1-pyrophosphate (PRPP) to anthranilate to yield N-(5'-phosphoribosyl)-anthranilate (PRA). The chain is Anthranilate phosphoribosyltransferase from Christiangramia forsetii (strain DSM 17595 / CGMCC 1.15422 / KT0803) (Gramella forsetii).